We begin with the raw amino-acid sequence, 676 residues long: UvrABC system protein B (676 aa).

Residues 39 to 424 form the Helicase ATP-binding domain; sequence RGILDGIPSQ…RGHIIEQIIR (386 aa). 52 to 59 provides a ligand contact to ATP; the sequence is GTTGSGKT. The Beta-hairpin motif lies at 105–128; it reads YYDYYQPEAYIARSDTYIEKSLLI. Residues 441–604 enclose the Helicase C-terminal domain; that stretch reads QIDDLLEEIR…ITPKPIIKPI (164 aa). A disordered region spans residues 611 to 631; that stretch reads KEGAQEDSRPETQSTEDLESS. Positions 629–664 constitute a UVR domain; it reads ESSIKQYEEAMYKAAQDFQFDEAAKYRDLMNAAKRQ.

This sequence belongs to the UvrB family. In terms of assembly, forms a heterotetramer with UvrA during the search for lesions. Interacts with UvrC in an incision complex.

Its subcellular location is the cytoplasm. Functionally, the UvrABC repair system catalyzes the recognition and processing of DNA lesions. A damage recognition complex composed of 2 UvrA and 2 UvrB subunits scans DNA for abnormalities. Upon binding of the UvrA(2)B(2) complex to a putative damaged site, the DNA wraps around one UvrB monomer. DNA wrap is dependent on ATP binding by UvrB and probably causes local melting of the DNA helix, facilitating insertion of UvrB beta-hairpin between the DNA strands. Then UvrB probes one DNA strand for the presence of a lesion. If a lesion is found the UvrA subunits dissociate and the UvrB-DNA preincision complex is formed. This complex is subsequently bound by UvrC and the second UvrB is released. If no lesion is found, the DNA wraps around the other UvrB subunit that will check the other stand for damage. The chain is UvrABC system protein B from Chlamydia muridarum (strain MoPn / Nigg).